Here is a 185-residue protein sequence, read N- to C-terminus: Ribosome-recycling factor (185 aa).

It belongs to the RRF family.

The protein resides in the cytoplasm. Responsible for the release of ribosomes from messenger RNA at the termination of protein biosynthesis. May increase the efficiency of translation by recycling ribosomes from one round of translation to another. This is Ribosome-recycling factor from Pseudomonas putida (strain W619).